The primary structure comprises 91 residues: Ice-structuring protein (91 aa).

The N-terminal stretch at 1–21 (MALSLFTVGQLIFLFWTMRIT) is a signal peptide. A propeptide spans 22 to 39 (EANPDPAAKAVPAAAAPD) (removed by a dipeptidylpeptidase).

Belongs to the type-I AFP family.

The protein resides in the secreted. In terms of biological role, contributes to protect fish blood from freezing at subzero sea water temperatures. Lowers the blood freezing point. Binds to nascent ice crystals and prevents further growth. The sequence is that of Ice-structuring protein from Pseudopleuronectes americanus (Winter flounder).